The following is a 187-amino-acid chain: Probable carboxylesterase Culp7 (187 aa).

A disulfide bridge connects residues C15 and C69. The active-site Nucleophile is the S80. A disulfide bond links C151 and C158. Residue D155 is part of the active site. Residue H167 is the Proton donor/acceptor of the active site.

Belongs to the cutinase family.

It localises to the cytoplasm. It is found in the cell membrane. The protein resides in the secreted. The protein localises to the cell wall. In terms of biological role, may have a role in cell wall processes. Does not exhibit cutinase activity. This chain is Probable carboxylesterase Culp7, found in Mycobacterium tuberculosis (strain ATCC 25618 / H37Rv).